Here is a 351-residue protein sequence, read N- to C-terminus: Phenylalanine--tRNA ligase alpha subunit (351 aa).

Position 266 (Glu266) interacts with Mg(2+).

This sequence belongs to the class-II aminoacyl-tRNA synthetase family. Phe-tRNA synthetase alpha subunit type 1 subfamily. Tetramer of two alpha and two beta subunits. Mg(2+) is required as a cofactor.

The protein resides in the cytoplasm. The catalysed reaction is tRNA(Phe) + L-phenylalanine + ATP = L-phenylalanyl-tRNA(Phe) + AMP + diphosphate + H(+). The polypeptide is Phenylalanine--tRNA ligase alpha subunit (Anaplasma marginale (strain St. Maries)).